The sequence spans 579 residues: Fatty-acid amide hydrolase 1 (579 aa).

Residues 9–29 (ALPGASGVALACCFVAAAVAL) traverse the membrane as a helical segment. At 30–403 (RWSGRRTARG…GDFVDPCLGD (374 aa)) the chain is on the cytoplasmic side. Catalysis depends on lysine 142, which acts as the Charge relay system. Residues methionine 191, serine 217, and 238-241 (IGGS) each bind substrate. Residue serine 217 is the Charge relay system of the active site. The active-site Acyl-ester intermediate is serine 241. Serine 241 bears the Phosphoserine mark. An intramembrane segment occupies 404–433 (LVSILKLPQWLKGLLAFLVKPLLPRLSAFL). Topologically, residues 434-579 (SNMKSRSAGK…RLMTPEKQSS (146 aa)) are cytoplasmic.

It belongs to the amidase family. Homodimer. In terms of tissue distribution, highly expressed in the brain, small intestine, pancreas, skeletal muscle and testis. Also expressed in the kidney, liver, lung, placenta and prostate.

It is found in the endomembrane system. The protein resides in the cytoplasm. The protein localises to the cytoskeleton. It carries out the reaction N-(5Z,8Z,11Z,14Z-eicosatetraenoyl)-ethanolamine + H2O = ethanolamine + (5Z,8Z,11Z,14Z)-eicosatetraenoate. The catalysed reaction is (9Z)-octadecenamide + H2O = (9Z)-octadecenoate + NH4(+). It catalyses the reaction 2-(5Z,8Z,11Z,14Z-eicosatetraenoyl)-glycerol + H2O = glycerol + (5Z,8Z,11Z,14Z)-eicosatetraenoate + H(+). The enzyme catalyses N-(9Z-octadecenoyl) ethanolamine + H2O = ethanolamine + (9Z)-octadecenoate. It carries out the reaction N-hexadecanoylethanolamine + H2O = ethanolamine + hexadecanoate. The catalysed reaction is hexadecanamide + H2O = hexadecanoate + NH4(+). It catalyses the reaction tetradecamide + H2O = tetradecanoate + NH4(+). The enzyme catalyses N-(9Z-octadecenoyl)-taurine + H2O = taurine + (9Z)-octadecenoate. It carries out the reaction (9Z,12Z,15Z)-octadecatrienamide + H2O = (9Z,12Z,15Z)-octadecatrienoate + NH4(+). The catalysed reaction is (5Z,8Z,11Z,14Z)-eicosatetraenamide + H2O = (5Z,8Z,11Z,14Z)-eicosatetraenoate + NH4(+). It catalyses the reaction (6Z)-octadecenamide + H2O = (6Z)-octadecenoate + NH4(+). The enzyme catalyses (15Z)-tetracosenamide + H2O = (15Z)-tetracosenoate + NH4(+). It carries out the reaction (8Z,11Z,14Z)-eicosatrienamide + H2O = (8Z,11Z,14Z)-eicosatrienoate + NH4(+). The catalysed reaction is (11Z,14Z,17Z)-eicosatrienamide + H2O = (11Z,14Z,17Z)-eicosatrienoate + NH4(+). It catalyses the reaction (11Z,14Z)-eicosadienamide + H2O = (11Z,14Z)-eicosadienoate + NH4(+). The enzyme catalyses (9Z,12Z)-octadecadienamide + H2O = (9Z,12Z)-octadecadienoate + NH4(+). It carries out the reaction 1-O-methyl-(5Z,8Z,11Z,14Z)-eicosatetraenoate + H2O = methanol + (5Z,8Z,11Z,14Z)-eicosatetraenoate + H(+). The catalysed reaction is (11Z)-eicosenamide + H2O = (11Z)-eicosenoate + NH4(+). It catalyses the reaction N-(9Z-hexadecenoyl) ethanolamine + H2O = (9Z)-hexadecenoate + ethanolamine. The enzyme catalyses N-octadecanoyl ethanolamine + H2O = octadecanoate + ethanolamine. It carries out the reaction N-docosanoyl-ethanolamine + H2O = docosanoate + ethanolamine. The catalysed reaction is N-tetracosanoyl-taurine + H2O = tetracosanoate + taurine. It catalyses the reaction N-(15Z-tetracosenoyl)-ethanolamine + H2O = (15Z)-tetracosenoate + ethanolamine. The enzyme catalyses N-docosanoyl-taurine + H2O = docosanoate + taurine. It carries out the reaction N-(15Z-tetracosenoyl)-taurine + H2O = (15Z)-tetracosenoate + taurine. The catalysed reaction is N-tricosanoyl-taurine + H2O = tricosanoate + taurine. It catalyses the reaction (9Z)-octadecenoate + glycine = N-(9Z-octadecenoyl)glycine + H2O. The enzyme catalyses N-(5Z,8Z,11Z,14Z)-eicosatetraenoyl-glycine + H2O = (5Z,8Z,11Z,14Z)-eicosatetraenoate + glycine. It carries out the reaction N-(5Z,8Z,11Z,14Z-eicosatetraenoyl)-L-serine + H2O = (5Z,8Z,11Z,14Z)-eicosatetraenoate + L-serine. With respect to regulation, inhibited by O-aryl carbamates and alpha-keto heterocycles. Inhibited by trifluoromethyl ketone. In terms of biological role, catalyzes the hydrolysis of endogenous amidated lipids like the sleep-inducing lipid oleamide ((9Z)-octadecenamide), the endocannabinoid anandamide (N-(5Z,8Z,11Z,14Z-eicosatetraenoyl)-ethanolamine), as well as other fatty amides, to their corresponding fatty acids, thereby regulating the signaling functions of these molecules. Hydrolyzes polyunsaturated substrate anandamide preferentially as compared to monounsaturated substrates. It can also catalyze the hydrolysis of the endocannabinoid 2-arachidonoylglycerol (2-(5Z,8Z,11Z,14Z-eicosatetraenoyl)-glycerol). FAAH cooperates with PM20D1 in the hydrolysis of amino acid-conjugated fatty acids such as N-fatty acyl glycine and N-fatty acyl-L-serine, thereby acting as a physiological regulator of specific subsets of intracellular, but not of extracellular, N-fatty acyl amino acids. This chain is Fatty-acid amide hydrolase 1 (FAAH), found in Homo sapiens (Human).